The following is a 155-amino-acid chain: 6,7-dimethyl-8-ribityllumazine synthase (155 aa).

5-amino-6-(D-ribitylamino)uracil is bound by residues F24, 58–60, and 82–84; these read AFE and VII. Residue 87-88 participates in (2S)-2-hydroxy-3-oxobutyl phosphate binding; it reads ST. The active-site Proton donor is the H90. F115 contacts 5-amino-6-(D-ribitylamino)uracil. R129 is a (2S)-2-hydroxy-3-oxobutyl phosphate binding site.

Belongs to the DMRL synthase family.

The catalysed reaction is (2S)-2-hydroxy-3-oxobutyl phosphate + 5-amino-6-(D-ribitylamino)uracil = 6,7-dimethyl-8-(1-D-ribityl)lumazine + phosphate + 2 H2O + H(+). The protein operates within cofactor biosynthesis; riboflavin biosynthesis; riboflavin from 2-hydroxy-3-oxobutyl phosphate and 5-amino-6-(D-ribitylamino)uracil: step 1/2. Functionally, catalyzes the formation of 6,7-dimethyl-8-ribityllumazine by condensation of 5-amino-6-(D-ribitylamino)uracil with 3,4-dihydroxy-2-butanone 4-phosphate. This is the penultimate step in the biosynthesis of riboflavin. The polypeptide is 6,7-dimethyl-8-ribityllumazine synthase (Chlorobaculum tepidum (strain ATCC 49652 / DSM 12025 / NBRC 103806 / TLS) (Chlorobium tepidum)).